The following is a 363-amino-acid chain: UDP-N-acetylglucosamine--N-acetylmuramyl-(pentapeptide) pyrophosphoryl-undecaprenol N-acetylglucosamine transferase (363 aa).

UDP-N-acetyl-alpha-D-glucosamine is bound by residues 10–12, Asn124, Ser195, and Gln295; that span reads TGG.

This sequence belongs to the glycosyltransferase 28 family. MurG subfamily.

It is found in the cell membrane. It catalyses the reaction di-trans,octa-cis-undecaprenyl diphospho-N-acetyl-alpha-D-muramoyl-L-alanyl-D-glutamyl-meso-2,6-diaminopimeloyl-D-alanyl-D-alanine + UDP-N-acetyl-alpha-D-glucosamine = di-trans,octa-cis-undecaprenyl diphospho-[N-acetyl-alpha-D-glucosaminyl-(1-&gt;4)]-N-acetyl-alpha-D-muramoyl-L-alanyl-D-glutamyl-meso-2,6-diaminopimeloyl-D-alanyl-D-alanine + UDP + H(+). It functions in the pathway cell wall biogenesis; peptidoglycan biosynthesis. In terms of biological role, cell wall formation. Catalyzes the transfer of a GlcNAc subunit on undecaprenyl-pyrophosphoryl-MurNAc-pentapeptide (lipid intermediate I) to form undecaprenyl-pyrophosphoryl-MurNAc-(pentapeptide)GlcNAc (lipid intermediate II). This Bacillus subtilis (strain 168) protein is UDP-N-acetylglucosamine--N-acetylmuramyl-(pentapeptide) pyrophosphoryl-undecaprenol N-acetylglucosamine transferase.